A 113-amino-acid chain; its full sequence is Large ribosomal subunit protein uL24 (113 aa).

Belongs to the universal ribosomal protein uL24 family. Part of the 50S ribosomal subunit.

In terms of biological role, one of two assembly initiator proteins, it binds directly to the 5'-end of the 23S rRNA, where it nucleates assembly of the 50S subunit. One of the proteins that surrounds the polypeptide exit tunnel on the outside of the subunit. This Synechococcus sp. (strain RCC307) protein is Large ribosomal subunit protein uL24.